The following is a 278-amino-acid chain: Formamidopyrimidine-DNA glycosylase (278 aa).

The active-site Schiff-base intermediate with DNA is P2. The active-site Proton donor is E3. The Proton donor; for beta-elimination activity role is filled by K57. DNA-binding residues include H90, R109, and K150. The FPG-type zinc-finger motif lies at 235–269; sequence QVYGRAGEPCRQCGHPIEIAKHGQRSTFFCRHCQF. Residue R259 is the Proton donor; for delta-elimination activity of the active site.

This sequence belongs to the FPG family. As to quaternary structure, monomer. The cofactor is Zn(2+).

It catalyses the reaction Hydrolysis of DNA containing ring-opened 7-methylguanine residues, releasing 2,6-diamino-4-hydroxy-5-(N-methyl)formamidopyrimidine.. The catalysed reaction is 2'-deoxyribonucleotide-(2'-deoxyribose 5'-phosphate)-2'-deoxyribonucleotide-DNA = a 3'-end 2'-deoxyribonucleotide-(2,3-dehydro-2,3-deoxyribose 5'-phosphate)-DNA + a 5'-end 5'-phospho-2'-deoxyribonucleoside-DNA + H(+). Functionally, involved in base excision repair of DNA damaged by oxidation or by mutagenic agents. Acts as a DNA glycosylase that recognizes and removes damaged bases. Has a preference for oxidized purines, such as 7,8-dihydro-8-oxoguanine (8-oxoG). Has AP (apurinic/apyrimidinic) lyase activity and introduces nicks in the DNA strand. Cleaves the DNA backbone by beta-delta elimination to generate a single-strand break at the site of the removed base with both 3'- and 5'-phosphates. The polypeptide is Formamidopyrimidine-DNA glycosylase (Yersinia pestis (strain Pestoides F)).